We begin with the raw amino-acid sequence, 179 residues long: Large ribosomal subunit protein uL5 (179 aa).

This sequence belongs to the universal ribosomal protein uL5 family. Part of the 50S ribosomal subunit; part of the 5S rRNA/L5/L18/L25 subcomplex. Contacts the 5S rRNA and the P site tRNA. Forms a bridge to the 30S subunit in the 70S ribosome.

In terms of biological role, this is one of the proteins that bind and probably mediate the attachment of the 5S RNA into the large ribosomal subunit, where it forms part of the central protuberance. In the 70S ribosome it contacts protein S13 of the 30S subunit (bridge B1b), connecting the 2 subunits; this bridge is implicated in subunit movement. Contacts the P site tRNA; the 5S rRNA and some of its associated proteins might help stabilize positioning of ribosome-bound tRNAs. This Polaromonas naphthalenivorans (strain CJ2) protein is Large ribosomal subunit protein uL5.